The following is a 208-amino-acid chain: High frequency lysogenization protein HflD homolog (208 aa).

This sequence belongs to the HflD family.

Its subcellular location is the cytoplasm. The protein localises to the cell inner membrane. In Pseudomonas putida (strain ATCC 700007 / DSM 6899 / JCM 31910 / BCRC 17059 / LMG 24140 / F1), this protein is High frequency lysogenization protein HflD homolog.